The sequence spans 145 residues: 3-hydroxyacyl-[acyl-carrier-protein] dehydratase FabZ (145 aa).

H47 is a catalytic residue.

It belongs to the thioester dehydratase family. FabZ subfamily.

It localises to the cytoplasm. The enzyme catalyses a (3R)-hydroxyacyl-[ACP] = a (2E)-enoyl-[ACP] + H2O. In terms of biological role, involved in unsaturated fatty acids biosynthesis. Catalyzes the dehydration of short chain beta-hydroxyacyl-ACPs and long chain saturated and unsaturated beta-hydroxyacyl-ACPs. The protein is 3-hydroxyacyl-[acyl-carrier-protein] dehydratase FabZ of Aromatoleum aromaticum (strain DSM 19018 / LMG 30748 / EbN1) (Azoarcus sp. (strain EbN1)).